The primary structure comprises 418 residues: Tyrosine--tRNA ligase (418 aa).

L-tyrosine is bound at residue Tyr34. The 'HIGH' region signature appears at Pro39–His48. Positions 169 and 173 each coordinate L-tyrosine. The short motif at Lys229–Ser233 is the 'KMSKS' region element. Lys232 is a binding site for ATP. The 67-residue stretch at Leu352–Tyr418 folds into the S4 RNA-binding domain.

The protein belongs to the class-I aminoacyl-tRNA synthetase family. TyrS type 1 subfamily. Homodimer.

Its subcellular location is the cytoplasm. The catalysed reaction is tRNA(Tyr) + L-tyrosine + ATP = L-tyrosyl-tRNA(Tyr) + AMP + diphosphate + H(+). Functionally, catalyzes the attachment of tyrosine to tRNA(Tyr) in a two-step reaction: tyrosine is first activated by ATP to form Tyr-AMP and then transferred to the acceptor end of tRNA(Tyr). The chain is Tyrosine--tRNA ligase from Streptococcus thermophilus (strain ATCC BAA-491 / LMD-9).